The sequence spans 882 residues: Exo-beta-D-glucosaminidase ARB_07888 (882 aa).

A signal peptide spans 1-21 (MWFVFRPAAIPALLLTLGVSA). Positions 22–31 (LSPLRPLVST) are excised as a propeptide. N-linked (GlcNAc...) asparagine glycosylation is found at N86, N200, N234, N237, N287, and N442. Catalysis depends on D466, which acts as the Proton donor. E538 acts as the Nucleophile in catalysis. Residues N688, N773, and N816 are each glycosylated (N-linked (GlcNAc...) asparagine).

The protein belongs to the glycosyl hydrolase 2 family. As to quaternary structure, monomer.

Its subcellular location is the secreted. The enzyme catalyses Hydrolysis of chitosan or chitosan oligosaccharides to remove successive D-glucosamine residues from the non-reducing termini.. Its function is as follows. Hydrolyzes chitosan and chitooligosaccharides with retention of anomeric configuration. In Arthroderma benhamiae (strain ATCC MYA-4681 / CBS 112371) (Trichophyton mentagrophytes), this protein is Exo-beta-D-glucosaminidase ARB_07888.